A 367-amino-acid polypeptide reads, in one-letter code: Coiled-coil domain-containing protein 34 (367 aa).

Ser55 is subject to Phosphoserine. 3 disordered regions span residues 77 to 105 (FPFGADDSEGEDEEALDEDARESESKVES), 191 to 228 (QKKNKQERKEREQKINKEMEEKEAKKREKEHLQEKAKE), and 310 to 349 (YNPIPWKPIHMPPPKEAKSGPGKKSKRHAASQPLPSSSLA). Residues 82–97 (DDSEGEDEEALDEDAR) are compositionally biased toward acidic residues. Coiled coils occupy residues 87–108 (EDEEALDEDARESESKVESLEG) and 153–280 (RLQQ…AKNK). The span at 197 to 228 (ERKEREQKINKEMEEKEAKKREKEHLQEKAKE) shows a compositional bias: basic and acidic residues. Residues 339–349 (ASQPLPSSSLA) show a composition bias toward low complexity.

In terms of tissue distribution, expressed in testis and sperm.

The protein resides in the cell projection. Its subcellular location is the cilium. It is found in the flagellum. Involved in spermatogenesis. Has a probable role in anterograde intraflagellar transport which is essential for the formation of sperm flagella. The sequence is that of Coiled-coil domain-containing protein 34 (Ccdc34) from Mus musculus (Mouse).